The chain runs to 930 residues: Transcription initiation factor TFIID subunit 3 (930 aa).

6 disordered regions span residues 128-151 (MPPI…GTSA), 175-381 (YLSK…KKLP), 404-507 (PDPF…PEPL), 519-578 (SSVE…QWKE), 599-755 (DTKV…PAPS), and 782-820 (EAKP…APPQ). Positions 274–291 (KTSSPGQKTKSPKTTPSP) are enriched in low complexity. Positions 428–446 (VSETTATTPKPSVSTNCSN) are enriched in polar residues. The span at 448–462 (AGATPVPPSGGTSSS) shows a compositional bias: low complexity. The span at 482-494 (GTPSNPPANFTYF) shows a compositional bias: polar residues. Residues 525–539 (KKLKKELKTKMKKKE) show a composition bias toward basic residues. Composition is skewed to basic and acidic residues over residues 540-578 (KQKE…QWKE), 599-612 (DTKV…TKKE), and 621-648 (KEKE…DKIK). Low complexity predominate over residues 674–686 (LPSMLPSLSPMLP). The segment covering 688-699 (KLFEDKEKPKEK) has biased composition (basic and acidic residues). Over residues 700–711 (KKDKKEKKKKKE) the composition is skewed to basic residues. The span at 712–737 (REKDKEKEKKDKEKERKEREKKEKEK) shows a compositional bias: basic and acidic residues. Over residues 793 to 820 (KTPPPVPSPVPAPVHVTPPPAPVPAPPQ) the composition is skewed to pro residues. The PHD-type zinc finger occupies 866-916 (IWFCPGCNKPDDGSPMIGCDDCDDWYHWPCVGITAAPPEEMQWFCSKCANK).

It belongs to the TAF3 family. In terms of assembly, component of the TFIID basal transcription factor complex, composed of TATA-box-binding protein TBP, and a number of TBP-associated factors (TAFs), including TAF1, TAF2, TAF3, TAF4, TAF5, TAF6, TAF7, TAF8, TAF9, TAF10, TAF11, TAF12 and TAF13. Interacts with TAF10 via the histone fold. Interacts with TAF13, TBP, SAP130 and GCN5L2. Interacts with TBPL2.

Its subcellular location is the nucleus. Its function is as follows. The TFIID basal transcription factor complex plays a major role in the initiation of RNA polymerase II (Pol II)-dependent transcription. TFIID recognizes and binds promoters with or without a TATA box via its subunit TBP, a TATA-box-binding protein, and promotes assembly of the pre-initiation complex (PIC). The TFIID complex consists of TBP and TBP-associated factors (TAFs), including TAF1, TAF2, TAF3, TAF4, TAF5, TAF6, TAF7, TAF8, TAF9, TAF10, TAF11, TAF12 and TAF13. The TFIID complex structure can be divided into 3 modules TFIID-A, TFIID-B, and TFIID-C. TAF3 forms the TFIID-A module together with TAF5 and TBP. Required in complex with TBPL2 for the differentiation of myoblasts into myocytes. The TAF3-TBPL2 complex replaces TFIID at specific promoters at an early stage in the differentiation process. The polypeptide is Transcription initiation factor TFIID subunit 3 (TAF3) (Gallus gallus (Chicken)).